The following is a 198-amino-acid chain: MLRSFLLIVATVSLFGQCKPLPLATSPVSDAVRAPHRSTHETRFVRTNDEERGATMTLAGVLRDKAQTKQLLTSWLNSGKSVPSVSNKLGLKRMSLEQAIHHENWKALTTFQRMKSKKAKAYAKYGTGYQTEAKTKENLLQWVMRGDSPKEVSSTLGLLGLSRRKIIDHQNYEAFRTFLKYRKQWAEMQGNGFTKLTT.

Positions 1–20 are cleaved as a signal peptide; that stretch reads MLRSFLLIVATVSLFGQCKP. The short motif at 43 to 52 is the RxLR-dEER element; that stretch reads RFVRTNDEER.

This sequence belongs to the RxLR effector family.

It localises to the secreted. It is found in the host cytoplasm. Its subcellular location is the host nucleus. The protein resides in the host nucleolus. In terms of biological role, effector that is involved in host plant infection. Contributes to virulence during the early infection stage, by inhibiting plant defense responses induced by both PAMP-triggered immunity (PTI) and effector-triggered immunity (ETI). The polypeptide is RxLR effector protein CRE4 (CRE4) (Phytophthora infestans (strain T30-4) (Potato late blight agent)).